We begin with the raw amino-acid sequence, 198 residues long: Probable nicotinate-nucleotide adenylyltransferase (198 aa).

It belongs to the NadD family.

It catalyses the reaction nicotinate beta-D-ribonucleotide + ATP + H(+) = deamido-NAD(+) + diphosphate. The protein operates within cofactor biosynthesis; NAD(+) biosynthesis; deamido-NAD(+) from nicotinate D-ribonucleotide: step 1/1. Functionally, catalyzes the reversible adenylation of nicotinate mononucleotide (NaMN) to nicotinic acid adenine dinucleotide (NaAD). This is Probable nicotinate-nucleotide adenylyltransferase from Albidiferax ferrireducens (strain ATCC BAA-621 / DSM 15236 / T118) (Rhodoferax ferrireducens).